We begin with the raw amino-acid sequence, 117 residues long: Prefoldin subunit beta (117 aa).

This sequence belongs to the prefoldin subunit beta family. In terms of assembly, heterohexamer of two alpha and four beta subunits.

It is found in the cytoplasm. Functionally, molecular chaperone capable of stabilizing a range of proteins. Seems to fulfill an ATP-independent, HSP70-like function in archaeal de novo protein folding. In Pyrococcus horikoshii (strain ATCC 700860 / DSM 12428 / JCM 9974 / NBRC 100139 / OT-3), this protein is Prefoldin subunit beta (pfdB).